A 304-amino-acid polypeptide reads, in one-letter code: Dihydroorotate dehydrogenase B (NAD(+)), catalytic subunit (304 aa).

Residues Ser22 and 46–47 (KG) each bind FMN. Substrate-binding positions include Lys46 and 70-74 (NSIGL). Residues Asn100 and Asn128 each contribute to the FMN site. Position 128 (Asn128) interacts with substrate. Cys131 acts as the Nucleophile in catalysis. FMN contacts are provided by Lys166 and Ile192. Residue 193 to 194 (NT) participates in substrate binding. FMN-binding positions include Gly218, 244 to 245 (GG), and 266 to 267 (GT).

Belongs to the dihydroorotate dehydrogenase family. Type 1 subfamily. Heterotetramer of 2 PyrK and 2 PyrD type B subunits. However, the metal reductase complex seems to be composed of a heterooctamer of 4 PyrK and 4 PyrD subunits. It depends on FMN as a cofactor.

It is found in the cytoplasm. It carries out the reaction (S)-dihydroorotate + NAD(+) = orotate + NADH + H(+). It participates in pyrimidine metabolism; UMP biosynthesis via de novo pathway; orotate from (S)-dihydroorotate (NAD(+) route): step 1/1. Functionally, catalyzes the conversion of dihydroorotate to orotate with NAD(+) as electron acceptor. In terms of biological role, together with PyrK, also forms a metal reductase complex able to reduce Fe(III)-chelates to Fe(II)-chelates, as well as soluble Cr(VI) and U(VI), using NADH as electron donor. To a lesser extent, can also use NADPH as an electron donor. Is unable to reduce riboflavin and FMN with NADH as electron donor. May have an in vivo role in metal reduction in D.reducens, which is an organism capable of reducing contaminant heavy metals and radionuclides. In Desulforamulus reducens (strain ATCC BAA-1160 / DSM 100696 / MI-1) (Desulfotomaculum reducens), this protein is Dihydroorotate dehydrogenase B (NAD(+)), catalytic subunit (pyrD).